A 331-amino-acid chain; its full sequence is Protein C10 (331 aa).

It belongs to the poxviridae C4/C10 protein family.

In Vaccinia virus (strain Western Reserve) (VACV), this protein is Protein C10.